A 154-amino-acid chain; its full sequence is Myoglobin (154 aa).

In terms of domain architecture, Globin spans 2–148; the sequence is ELSDQEWKHV…FRNDMASKYK (147 aa). Residue His-65 participates in nitrite binding. His-65 is a binding site for O2. His-94 provides a ligand contact to heme b.

It belongs to the globin family. In terms of assembly, monomeric.

It localises to the cytoplasm. It is found in the sarcoplasm. The enzyme catalyses Fe(III)-heme b-[protein] + nitric oxide + H2O = Fe(II)-heme b-[protein] + nitrite + 2 H(+). It carries out the reaction H2O2 + AH2 = A + 2 H2O. Functionally, monomeric heme protein which primary function is to store oxygen and facilitate its diffusion within muscle tissues. Reversibly binds oxygen through a pentacoordinated heme iron and enables its timely and efficient release as needed during periods of heightened demand. Depending on the oxidative conditions of tissues and cells, and in addition to its ability to bind oxygen, it also has a nitrite reductase activity whereby it regulates the production of bioactive nitric oxide. Under stress conditions, like hypoxia and anoxia, it also protects cells against reactive oxygen species thanks to its pseudoperoxidase activity. This is Myoglobin (MB) from Alligator mississippiensis (American alligator).